A 192-amino-acid chain; its full sequence is Pyruvate kinase (192 aa).

Arginine 41 lines the substrate pocket. Asparagine 43, serine 45, aspartate 75, and threonine 76 together coordinate K(+). 43-46 contacts ATP; it reads NFSH.

It belongs to the pyruvate kinase family. Requires Mg(2+) as cofactor. K(+) serves as cofactor.

It carries out the reaction pyruvate + ATP = phosphoenolpyruvate + ADP + H(+). It participates in carbohydrate degradation; glycolysis; pyruvate from D-glyceraldehyde 3-phosphate: step 5/5. The polypeptide is Pyruvate kinase (pyk) (Spiroplasma citri).